We begin with the raw amino-acid sequence, 198 residues long: Glycerol-3-phosphate acyltransferase (198 aa).

5 helical membrane passes run 4 to 24 (LALI…AVLI), 53 to 75 (SAAG…GGYF), 80 to 102 (PFML…FFHF), 112 to 132 (LGAL…CWVV), and 134 to 154 (VLVT…APLF).

It belongs to the PlsY family. Probably interacts with PlsX.

Its subcellular location is the cell inner membrane. The catalysed reaction is an acyl phosphate + sn-glycerol 3-phosphate = a 1-acyl-sn-glycero-3-phosphate + phosphate. It participates in lipid metabolism; phospholipid metabolism. Catalyzes the transfer of an acyl group from acyl-phosphate (acyl-PO(4)) to glycerol-3-phosphate (G3P) to form lysophosphatidic acid (LPA). This enzyme utilizes acyl-phosphate as fatty acyl donor, but not acyl-CoA or acyl-ACP. The polypeptide is Glycerol-3-phosphate acyltransferase (Aliivibrio fischeri (strain ATCC 700601 / ES114) (Vibrio fischeri)).